The primary structure comprises 408 residues: tRNA-specific 2-thiouridylase MnmA (408 aa).

Residues 27 to 34 (AMSGGVDS) and L53 each bind ATP. The active-site Nucleophile is the C121. C121 and C222 are oxidised to a cystine. Residue G145 participates in ATP binding. The interaction with tRNA stretch occupies residues 172-174 (RDQ). C222 (cysteine persulfide intermediate) is an active-site residue.

It belongs to the MnmA/TRMU family.

The protein resides in the cytoplasm. The enzyme catalyses S-sulfanyl-L-cysteinyl-[protein] + uridine(34) in tRNA + AH2 + ATP = 2-thiouridine(34) in tRNA + L-cysteinyl-[protein] + A + AMP + diphosphate + H(+). Functionally, catalyzes the 2-thiolation of uridine at the wobble position (U34) of tRNA, leading to the formation of s(2)U34. The protein is tRNA-specific 2-thiouridylase MnmA of Rhizobium etli (strain ATCC 51251 / DSM 11541 / JCM 21823 / NBRC 15573 / CFN 42).